The chain runs to 302 residues: Digeranylgeranylglyceryl phosphate synthase (302 aa).

The next 8 helical transmembrane spans lie at 21 to 41 (LVVA…IYGG), 43 to 63 (IVSS…AGGY), 103 to 123 (IGLI…FAVL), 144 to 164 (IVIA…ASCM), 167 to 187 (GKVV…LLVL), 218 to 238 (AYMA…FPYI), 244 to 264 (MAYL…LAIL), and 282 to 302 (ARSA…AGLM).

It belongs to the UbiA prenyltransferase family. DGGGP synthase subfamily. It depends on Mg(2+) as a cofactor.

The protein resides in the cell membrane. The enzyme catalyses sn-3-O-(geranylgeranyl)glycerol 1-phosphate + (2E,6E,10E)-geranylgeranyl diphosphate = 2,3-bis-O-(geranylgeranyl)-sn-glycerol 1-phosphate + diphosphate. It functions in the pathway membrane lipid metabolism; glycerophospholipid metabolism. Its function is as follows. Prenyltransferase that catalyzes the transfer of the geranylgeranyl moiety of geranylgeranyl diphosphate (GGPP) to the C2 hydroxyl of (S)-3-O-geranylgeranylglyceryl phosphate (GGGP). This reaction is the second ether-bond-formation step in the biosynthesis of archaeal membrane lipids. This is Digeranylgeranylglyceryl phosphate synthase from Hyperthermus butylicus (strain DSM 5456 / JCM 9403 / PLM1-5).